The primary structure comprises 931 residues: MRVKDTLNLGRTKFPMRGKLPVTEAQREQLWEENKVYELRQKLNEGKPTFVLHDGPPYANGNIHIGHAMNKISKDFIVRYKSMSGYRAPYVPGWDTHGLPIEHQLTKSGYDRKKMSLTEFRDLCREYALKQVDKQRTDFKRLGVSGEWDHPYLTLDKEFEAAQIRVFGEFAKKGLLYQAKKPVYWSWSSESALAEAEVEYHDVVAKTAFFVEQIKDGKGRLDNDTYLVVWTTTPWTVPASEAVAVNPKFDYSVVNPANDDRKFVVATDLLEKLAEKLGWEDYEVVDHLMGQELEGMTTQHPYLDRDLLVGLADYVTADAGTGLVHTAPGYGDDDYNFGKKYDLPIFAPINDQGVLTKENGEGFEGVFYQDADDVSLQKLEENNALLLQEPLQHSYPFDWRTKQPIIFRATDQWFVSIEKMRQNILDALEDVKYHPEWGKVRLRNMIKDRGDWVISRQRVWGVPLPIFYAEDGTPIMEEETINHVAELFAKYGSNVWFEREAKDLLPEGYTNEHSPNGKFTKETDIMDVWFDSGSSHQGVLAERDYLTYPADLYLEGSDQYRGWFNSSLITSVVCSGHAPYKEIVSQGFTLDKRGNKMSKSQGNVIDPNKVVQQMGAEIIRLWVMSADTSADVRVSMGTFQQISEAYRKLRNTFRFLLANTSDFNPEENTVSYEKLQSVDKYMLVKLNHFLKTMREDFDNYDFLDAYKVLINFVNNDLSAFYMNIAKDVLYIEAENSEVRRSMQTVFYDILLTLVKLLTPILPHTTEEVWSYMNEPEDFVQLTEIPDPRTFAGEEELLSKWDDFMEVRSHVLKSLEEARNAKLIGKSLEAQVDLYLTDDQKQLLDSLNENIQLLLGVSALHVHPADEAPADADQYNDGVAVKVTTANGETCARCRMVKEDVGSDPAYPELCARCAAIVRENFPETAEDGLEE.

A 'HIGH' region motif is present at residues 57-67; the sequence is PYANGNIHIGH. Glutamate 555 lines the L-isoleucyl-5'-AMP pocket. The 'KMSKS' region signature appears at 596 to 600; it reads KMSKS. Lysine 599 is a binding site for ATP. Zn(2+)-binding residues include cysteine 890, cysteine 893, cysteine 910, and cysteine 913.

The protein belongs to the class-I aminoacyl-tRNA synthetase family. IleS type 1 subfamily. Monomer. Zn(2+) is required as a cofactor.

Its subcellular location is the cytoplasm. The enzyme catalyses tRNA(Ile) + L-isoleucine + ATP = L-isoleucyl-tRNA(Ile) + AMP + diphosphate. Catalyzes the attachment of isoleucine to tRNA(Ile). As IleRS can inadvertently accommodate and process structurally similar amino acids such as valine, to avoid such errors it has two additional distinct tRNA(Ile)-dependent editing activities. One activity is designated as 'pretransfer' editing and involves the hydrolysis of activated Val-AMP. The other activity is designated 'posttransfer' editing and involves deacylation of mischarged Val-tRNA(Ile). The polypeptide is Isoleucine--tRNA ligase (Limosilactobacillus reuteri subsp. reuteri (strain JCM 1112) (Lactobacillus reuteri)).